A 399-amino-acid chain; its full sequence is Zona occludens toxin (399 aa).

Its function is as follows. Increases the permeability of the small intestine mucosa by affecting the structure of intercellular tight junctions (zonula occludens). In Vibrio cholerae serotype O1 (strain ATCC 39315 / El Tor Inaba N16961), this protein is Zona occludens toxin (zot).